We begin with the raw amino-acid sequence, 214 residues long: Phosphoenolpyruvate guanylyltransferase 2 (214 aa).

Threonine 135, glycine 150, and serine 153 together coordinate phosphoenolpyruvate.

It belongs to the CofC family.

The enzyme catalyses phosphoenolpyruvate + GTP + H(+) = enolpyruvoyl-2-diphospho-5'-guanosine + diphosphate. Its pathway is cofactor biosynthesis; coenzyme F420 biosynthesis. Guanylyltransferase that catalyzes the activation of phosphoenolpyruvate (PEP) as enolpyruvoyl-2-diphospho-5'-guanosine, via the condensation of PEP with GTP. It is involved in the biosynthesis of coenzyme F420, a hydride carrier cofactor. The polypeptide is Phosphoenolpyruvate guanylyltransferase 2 (Rhodococcus jostii (strain RHA1)).